A 122-amino-acid chain; its full sequence is Large ribosomal subunit protein uL14 (122 aa).

The protein belongs to the universal ribosomal protein uL14 family. In terms of assembly, part of the 50S ribosomal subunit. Forms a cluster with proteins L3 and L19. In the 70S ribosome, L14 and L19 interact and together make contacts with the 16S rRNA in bridges B5 and B8.

Binds to 23S rRNA. Forms part of two intersubunit bridges in the 70S ribosome. The sequence is that of Large ribosomal subunit protein uL14 from Rhodococcus erythropolis (strain PR4 / NBRC 100887).